Consider the following 36-residue polypeptide: Toxin Bcg III 29.21 (36 aa).

Cys-6 and Cys-31 form a disulfide bridge.

Its subcellular location is the secreted. The protein localises to the nematocyst. This Bunodosoma cangicum (Sea anemone) protein is Toxin Bcg III 29.21.